An 85-amino-acid chain; its full sequence is DNA-directed RNA polymerase subunit omega (85 aa).

The protein belongs to the RNA polymerase subunit omega family. As to quaternary structure, the RNAP catalytic core consists of 2 alpha, 1 beta, 1 beta' and 1 omega subunit. When a sigma factor is associated with the core the holoenzyme is formed, which can initiate transcription.

The catalysed reaction is RNA(n) + a ribonucleoside 5'-triphosphate = RNA(n+1) + diphosphate. In terms of biological role, promotes RNA polymerase assembly. Latches the N- and C-terminal regions of the beta' subunit thereby facilitating its interaction with the beta and alpha subunits. The polypeptide is DNA-directed RNA polymerase subunit omega (Tropheryma whipplei (strain TW08/27) (Whipple's bacillus)).